A 223-amino-acid polypeptide reads, in one-letter code: Protein phosphatase 1 regulatory subunit 3C (223 aa).

The 106-residue stretch at 104–209 (REQLTRKLVC…NNDGKNYSLH (106 aa)) folds into the CBM21 domain.

In terms of assembly, interacts with PPP1CC catalytic subunit of PP1 and associates with glycogen. Forms complexes with glycogen phosphorylase, glycogen synthase and phosphorylase kinase which is necessary for its regulation of PP1 activity.

In terms of biological role, acts as a glycogen-targeting subunit for PP1 and regulates its activity. Activates glycogen synthase, reduces glycogen phosphorylase activity and limits glycogen breakdown. The chain is Protein phosphatase 1 regulatory subunit 3C from Xenopus tropicalis (Western clawed frog).